The sequence spans 110 residues: Chagasin (110 aa).

The BC loop motif lies at 29-34; sequence NPTTGF. The DE loop signature appears at 59 to 68; it reads PPDSKLLGAG. The short motif at 91–100 is the FG loop element; it reads RPWTGPSHDS.

This sequence belongs to the protease inhibitor I42 family. Interacts with cruzipain.

Its subcellular location is the flagellar pocket. The protein localises to the cytoplasmic vesicle. It localises to the cell surface. Cysteine protease inhibitor. Inhibits cysteine protease cruzipain. This chain is Chagasin (cha), found in Trypanosoma cruzi.